Here is a 202-residue protein sequence, read N- to C-terminus: Probable septum site-determining protein MinC (202 aa).

It belongs to the MinC family. As to quaternary structure, interacts with MinD and FtsZ.

In terms of biological role, cell division inhibitor that blocks the formation of polar Z ring septums. Rapidly oscillates between the poles of the cell to destabilize FtsZ filaments that have formed before they mature into polar Z rings. Prevents FtsZ polymerization. This chain is Probable septum site-determining protein MinC, found in Dictyoglomus turgidum (strain DSM 6724 / Z-1310).